The sequence spans 73 residues: Gas vesicle protein M2 (73 aa).

This sequence belongs to the gas vesicle GvpA family. In terms of assembly, gvpF to GvpM interact with each other in vitro, and may form multi-subunit complex(es). Might interact with GvpA.

The protein resides in the gas vesicle. In terms of biological role, proteins GvpF to GvpM might be involved in nucleating gas vesicle formation. A minor component of the gas vesicle. Gas vesicles are hollow, gas filled proteinaceous nanostructures found in several microbial planktonic microorganisms. They allow positioning of halobacteria at the optimal depth for growth in the poorly aerated, shallow brine pools of their habitat. Functionally, expression of 2 c-vac DNA fragments containing 2 divergently transcribed regions (gvpE-gvpF-gvpG-gvpH-gvpI-gvpJ-gvpK-gvpL-gvpM and gvpA-gvpC-gvpN-gvpO) allows H.volcanii to produce gas vesicles. The sequence is that of Gas vesicle protein M2 from Halobacterium salinarum (strain ATCC 700922 / JCM 11081 / NRC-1) (Halobacterium halobium).